Consider the following 265-residue polypeptide: Small ribosomal subunit protein eS4 (265 aa).

The 63-residue stretch at 42–104 folds into the S4 RNA-binding domain; sequence LPLILIIRNR…TGENYRLLYD (63 aa).

The protein belongs to the eukaryotic ribosomal protein eS4 family.

The protein localises to the cytoplasm. This is Small ribosomal subunit protein eS4 (RPS4) from Oryza sativa subsp. japonica (Rice).